The sequence spans 174 residues: Ribosome maturation factor RimM (174 aa).

The 74-residue stretch at 96–169 folds into the PRC barrel domain; it reads KDTFFICDLI…KMVVDLPQGL (74 aa).

Belongs to the RimM family. In terms of assembly, binds ribosomal protein uS19.

Its subcellular location is the cytoplasm. Functionally, an accessory protein needed during the final step in the assembly of 30S ribosomal subunit, possibly for assembly of the head region. Essential for efficient processing of 16S rRNA. May be needed both before and after RbfA during the maturation of 16S rRNA. It has affinity for free ribosomal 30S subunits but not for 70S ribosomes. This is Ribosome maturation factor RimM from Acetivibrio thermocellus (strain ATCC 27405 / DSM 1237 / JCM 9322 / NBRC 103400 / NCIMB 10682 / NRRL B-4536 / VPI 7372) (Clostridium thermocellum).